A 40-amino-acid chain; its full sequence is Putative protein FAM86JP (40 aa).

Residues 1–40 form a disordered region; the sequence is MPGAFSQNSSKRRAVLPRSHRVAGRGPAEAGCLPGAPAGS. Positions 10-23 are enriched in basic residues; it reads SKRRAVLPRSHRVA.

This is Putative protein FAM86JP from Homo sapiens (Human).